Consider the following 448-residue polypeptide: Glutamate--tRNA ligase 2 (448 aa).

The 'HIGH' region signature appears at 9 to 19 (PSPTGKLHIGN). The short motif at 240–244 (KISKR) is the 'KMSKS' region element. Lys-243 provides a ligand contact to ATP.

The protein belongs to the class-I aminoacyl-tRNA synthetase family. Glutamate--tRNA ligase type 1 subfamily. Monomer.

It is found in the cytoplasm. The catalysed reaction is tRNA(Glu) + L-glutamate + ATP = L-glutamyl-tRNA(Glu) + AMP + diphosphate. In terms of biological role, catalyzes the attachment of glutamate to tRNA(Glu) in a two-step reaction: glutamate is first activated by ATP to form Glu-AMP and then transferred to the acceptor end of tRNA(Glu). In Orientia tsutsugamushi (strain Boryong) (Rickettsia tsutsugamushi), this protein is Glutamate--tRNA ligase 2.